The following is a 457-amino-acid chain: Phosphomethylpyrimidine synthase (457 aa).

Substrate contacts are provided by residues asparagine 80, methionine 109, tyrosine 139, histidine 175, 195-197 (SRG), 236-239 (DSLR), and glutamate 275. Histidine 279 provides a ligand contact to Zn(2+). Residue tyrosine 302 participates in substrate binding. Histidine 343 contacts Zn(2+). The [4Fe-4S] cluster site is built by cysteine 423, cysteine 426, and cysteine 431.

The protein belongs to the ThiC family. Requires [4Fe-4S] cluster as cofactor.

The enzyme catalyses 5-amino-1-(5-phospho-beta-D-ribosyl)imidazole + S-adenosyl-L-methionine = 4-amino-2-methyl-5-(phosphooxymethyl)pyrimidine + CO + 5'-deoxyadenosine + formate + L-methionine + 3 H(+). It participates in cofactor biosynthesis; thiamine diphosphate biosynthesis. Its function is as follows. Catalyzes the synthesis of the hydroxymethylpyrimidine phosphate (HMP-P) moiety of thiamine from aminoimidazole ribotide (AIR) in a radical S-adenosyl-L-methionine (SAM)-dependent reaction. The polypeptide is Phosphomethylpyrimidine synthase (Trichormus variabilis (strain ATCC 29413 / PCC 7937) (Anabaena variabilis)).